The sequence spans 293 residues: Protease HtpX (293 aa).

2 consecutive transmembrane segments (helical) span residues 4–24 and 34–54; these read IALF…VLSL and GLMI…LLMS. H139 contributes to the Zn(2+) binding site. E140 is an active-site residue. H143 contacts Zn(2+). A run of 2 helical transmembrane segments spans residues 158 to 178 and 193 to 213; these read IVNT…SGFL and LVYF…ASII. E222 contacts Zn(2+).

The protein belongs to the peptidase M48B family. Zn(2+) is required as a cofactor.

The protein resides in the cell inner membrane. The protein is Protease HtpX of Pectobacterium carotovorum subsp. carotovorum (strain PC1).